Reading from the N-terminus, the 131-residue chain is D-ribose pyranase (131 aa).

The active-site Proton donor is the His20. Substrate contacts are provided by residues Asp28, His98, and 120 to 122 (YSN).

This sequence belongs to the RbsD / FucU family. RbsD subfamily. As to quaternary structure, homodecamer.

The protein resides in the cytoplasm. The catalysed reaction is beta-D-ribopyranose = beta-D-ribofuranose. It functions in the pathway carbohydrate metabolism; D-ribose degradation; D-ribose 5-phosphate from beta-D-ribopyranose: step 1/2. Functionally, catalyzes the interconversion of beta-pyran and beta-furan forms of D-ribose. This is D-ribose pyranase from Pediococcus pentosaceus (strain ATCC 25745 / CCUG 21536 / LMG 10740 / 183-1w).